A 314-amino-acid chain; its full sequence is Jacalin-related lectin 9 (314 aa).

The N-terminal stretch at 1–23 is a signal peptide; that stretch reads MIFIYIFLFLSSAIIDSNGFAMA. Jacalin-type lectin domains lie at 24-165 and 168-313; these read QKLE…YLTK and PTKS…YFSP.

This sequence belongs to the jacalin lectin family.

The chain is Jacalin-related lectin 9 (JAL9) from Arabidopsis thaliana (Mouse-ear cress).